A 204-amino-acid chain; its full sequence is Leucyl/phenylalanyl-tRNA--protein transferase (204 aa).

It belongs to the L/F-transferase family.

It is found in the cytoplasm. The enzyme catalyses N-terminal L-lysyl-[protein] + L-leucyl-tRNA(Leu) = N-terminal L-leucyl-L-lysyl-[protein] + tRNA(Leu) + H(+). It carries out the reaction N-terminal L-arginyl-[protein] + L-leucyl-tRNA(Leu) = N-terminal L-leucyl-L-arginyl-[protein] + tRNA(Leu) + H(+). The catalysed reaction is L-phenylalanyl-tRNA(Phe) + an N-terminal L-alpha-aminoacyl-[protein] = an N-terminal L-phenylalanyl-L-alpha-aminoacyl-[protein] + tRNA(Phe). Its function is as follows. Functions in the N-end rule pathway of protein degradation where it conjugates Leu, Phe and, less efficiently, Met from aminoacyl-tRNAs to the N-termini of proteins containing an N-terminal arginine or lysine. This chain is Leucyl/phenylalanyl-tRNA--protein transferase, found in Sinorhizobium fredii (strain NBRC 101917 / NGR234).